Reading from the N-terminus, the 158-residue chain is Encapsulin nanocompartment cargo protein EncB (158 aa).

Positions 22, 52, and 55 each coordinate Fe cation. Short sequence motifs (di-iron-binding motif) lie at residues 52 to 55 (EKEH) and 58 to 61 (EAVH). The segment at 92–158 (ATVHVPTPDG…RGGGGSGSGR (67 aa)) is disordered. The interval 142–149 (LTVGSLRR) is probable targeting peptide. Gly residues predominate over residues 148 to 158 (RRGGGGSGSGR).

The protein belongs to the ferritin-like superfamily.

It is found in the encapsulin nanocompartment. Its function is as follows. Cargo protein of a type 1 encapsulin nanocompartment. May help nucleate Fe atoms in the interior of the encapsulin nanocompartment. Present in about 36 copies/encapsulin nanocompartment. In Myxococcus xanthus (strain DK1622), this protein is Encapsulin nanocompartment cargo protein EncB.